The following is a 329-amino-acid chain: GTP 3',8-cyclase (329 aa).

Residues 8-234 (AFARKFFYLR…QIRQRSDGPA (227 aa)) enclose the Radical SAM core domain. Position 17 (R17) interacts with GTP. Residues C24 and C28 each coordinate [4Fe-4S] cluster. Y30 contacts S-adenosyl-L-methionine. Residue C31 participates in [4Fe-4S] cluster binding. Residue R68 coordinates GTP. Residue G72 coordinates S-adenosyl-L-methionine. T99 contacts GTP. Residue S123 participates in S-adenosyl-L-methionine binding. A GTP-binding site is contributed by K160. M194 provides a ligand contact to S-adenosyl-L-methionine. Positions 257 and 260 each coordinate [4Fe-4S] cluster. 262-264 (RLR) is a binding site for GTP. C274 contacts [4Fe-4S] cluster.

Belongs to the radical SAM superfamily. MoaA family. As to quaternary structure, monomer and homodimer. It depends on [4Fe-4S] cluster as a cofactor.

The enzyme catalyses GTP + AH2 + S-adenosyl-L-methionine = (8S)-3',8-cyclo-7,8-dihydroguanosine 5'-triphosphate + 5'-deoxyadenosine + L-methionine + A + H(+). Its pathway is cofactor biosynthesis; molybdopterin biosynthesis. In terms of biological role, catalyzes the cyclization of GTP to (8S)-3',8-cyclo-7,8-dihydroguanosine 5'-triphosphate. The sequence is that of GTP 3',8-cyclase from Klebsiella pneumoniae (strain 342).